The following is a 129-amino-acid chain: Small ribosomal subunit protein uS9 (129 aa).

A disordered region spans residues 107 to 129; that stretch reads SRVVERKKPGKKKARRSPQFSKR. The segment covering 114–129 has biased composition (basic residues); the sequence is KPGKKKARRSPQFSKR.

It belongs to the universal ribosomal protein uS9 family.

The polypeptide is Small ribosomal subunit protein uS9 (Sulfurovum sp. (strain NBC37-1)).